The chain runs to 378 residues: MSKRDFYEVLGVPKNASDEEIKKAYRKLAMKHHPDRNQGDAAKPAEEKFKEAKEAYEMLSDPQKRAAYDQFGHAGVDPNMRGPGGAGAEGFGGFAEAFGDIFGDMFGGRRGAGGGRQVYRGNDLSYAMDITLEEAAKGKEAQIRIPSWENCETCHGSGAKPGTSAKTCTTCSGTGTVQMRQGFFSVQQTCPHCRGTGKIIPEPCVTCHGQGKVKKQKTLEVKIPAGIDDGMRIRSVGNGEPGTNGGPPGDLYIEIRLKKHEIFERDGDDLHCQVPVSFITAALGGEIEVPTLQGKAAIDIPEGTQAGKQFRLRGKGIKGVRASYPGDLYCHIVVETPVKLTEHQRKLLRELDDSLKKGGGKHSPSGESWTDRLKNLFT.

Residues 5–72 (DFYEVLGVPK…QKRAAYDQFG (68 aa)) enclose the J domain. The CR-type zinc-finger motif lies at 138–216 (GKEAQIRIPS…CHGQGKVKKQ (79 aa)). Zn(2+)-binding residues include cysteine 151, cysteine 154, cysteine 168, cysteine 171, cysteine 190, cysteine 193, cysteine 204, and cysteine 207. 4 CXXCXGXG motif repeats span residues 151–158 (CETCHGSG), 168–175 (CTTCSGTG), 190–197 (CPHCRGTG), and 204–211 (CVTCHGQG). Residues 354 to 378 (SLKKGGGKHSPSGESWTDRLKNLFT) are disordered. Residues 369–378 (WTDRLKNLFT) are compositionally biased toward basic and acidic residues.

The protein belongs to the DnaJ family. Homodimer. Zn(2+) is required as a cofactor.

It is found in the cytoplasm. Functionally, participates actively in the response to hyperosmotic and heat shock by preventing the aggregation of stress-denatured proteins and by disaggregating proteins, also in an autonomous, DnaK-independent fashion. Unfolded proteins bind initially to DnaJ; upon interaction with the DnaJ-bound protein, DnaK hydrolyzes its bound ATP, resulting in the formation of a stable complex. GrpE releases ADP from DnaK; ATP binding to DnaK triggers the release of the substrate protein, thus completing the reaction cycle. Several rounds of ATP-dependent interactions between DnaJ, DnaK and GrpE are required for fully efficient folding. Also involved, together with DnaK and GrpE, in the DNA replication of plasmids through activation of initiation proteins. In Paracidovorax citrulli (strain AAC00-1) (Acidovorax citrulli), this protein is Chaperone protein DnaJ.